The sequence spans 330 residues: Phosphate acyltransferase (330 aa).

The protein belongs to the PlsX family. As to quaternary structure, homodimer. Probably interacts with PlsY.

It localises to the cytoplasm. The enzyme catalyses a fatty acyl-[ACP] + phosphate = an acyl phosphate + holo-[ACP]. It participates in lipid metabolism; phospholipid metabolism. In terms of biological role, catalyzes the reversible formation of acyl-phosphate (acyl-PO(4)) from acyl-[acyl-carrier-protein] (acyl-ACP). This enzyme utilizes acyl-ACP as fatty acyl donor, but not acyl-CoA. This is Phosphate acyltransferase from Carboxydothermus hydrogenoformans (strain ATCC BAA-161 / DSM 6008 / Z-2901).